Consider the following 144-residue polypeptide: Large-conductance mechanosensitive channel (144 aa).

2 helical membrane-spanning segments follow: residues 21–41 (VGII…ANVI) and 76–96 (GIFL…FCII). The tract at residues 105–144 (QRGGKTRRAVQTECGRDAAYRDPRSLETTKQRHGAGYNDD) is disordered. Residues 118-134 (CGRDAAYRDPRSLETTK) are compositionally biased toward basic and acidic residues.

The protein belongs to the MscL family. As to quaternary structure, homopentamer.

The protein resides in the cell inner membrane. Functionally, channel that opens in response to stretch forces in the membrane lipid bilayer. May participate in the regulation of osmotic pressure changes within the cell. The sequence is that of Large-conductance mechanosensitive channel from Sodalis glossinidius (strain morsitans).